Consider the following 338-residue polypeptide: Endonuclease V (338 aa).

Residues aspartate 52 and aspartate 126 each coordinate Mg(2+). Residues 253-338 (QLGVAPAQRK…PSPAWVQSPP (86 aa)) form a disordered region. Basic and acidic residues-rich tracts occupy residues 260–270 (QRKDRSQKEQR) and 287–323 (RPPE…HQED). Positions 328–338 (PPSPAWVQSPP) are enriched in pro residues.

The protein belongs to the endonuclease V family. Monomer. Interacts with PABPC1; the interaction is RNA-dependent and stimulates ENDOV activity. The cofactor is Mg(2+). In terms of tissue distribution, highest levels detected in liver with high levels also found in heart, kidney and testis. Expressed at low levels in brain.

Its subcellular location is the cytoplasm. It is found in the nucleus. The protein resides in the nucleolus. It localises to the stress granule. Endoribonuclease that specifically cleaves inosine-containing RNAs: cleaves RNA at the second phosphodiester bond 3' to inosine. Active against both single-stranded and double-stranded RNAs. Has strong preference for single-stranded RNAs (ssRNAs) toward double-stranded RNAs (dsRNAs). Cleaves mRNAs and tRNAs containing inosine. Also able to cleave structure-specific dsRNA substrates containing the specific sites 5'-IIUI-3' and 5'-UIUU-3'. Inosine is present in a number of RNAs following editing; the function of inosine-specific endoribonuclease is still unclear: it could either play a regulatory role in edited RNAs, or be involved in antiviral response by removing the hyperedited long viral dsRNA genome that has undergone A-to-I editing. Binds branched DNA structures. The protein is Endonuclease V (Endov) of Mus musculus (Mouse).